A 327-amino-acid chain; its full sequence is Malate dehydrogenase (327 aa).

11–17 provides a ligand contact to NAD(+); it reads GAAGQIS. Residues R92 and R98 each coordinate substrate. NAD(+) contacts are provided by residues N105, Q112, and 129 to 131; that span reads VGN. Residues N131 and R162 each coordinate substrate. H187 functions as the Proton acceptor in the catalytic mechanism.

It belongs to the LDH/MDH superfamily. MDH type 2 family.

It carries out the reaction (S)-malate + NAD(+) = oxaloacetate + NADH + H(+). Catalyzes the reversible oxidation of malate to oxaloacetate. The chain is Malate dehydrogenase from Saccharophagus degradans (strain 2-40 / ATCC 43961 / DSM 17024).